The sequence spans 673 residues: Probable boron transporter 7 (673 aa).

Residues 1–35 lie on the Cytoplasmic side of the membrane; sequence MEGVKFPFGGIINDFNGRRKCYKQDWLAAFNSGVR. Residues 36–56 traverse the membrane as a helical segment; sequence ILAPTLYIFIASALPVIAFGE. Residues 57–75 are Extracellular-facing; the sequence is QLSRETDRSLGIAESLAST. Residues 76-96 form a helical membrane-spanning segment; it reads ALCGIIHSVFGGQPLLIVGVA. The Cytoplasmic segment spans residues 97 to 121; that stretch reads EPTIIMYTYLHSFSKSRPELGQKLY. The helical transmembrane segment at 122–142 threads the bilayer; that stretch reads LAWAGWVCVWTAVLLMLLAML. Topologically, residues 143–160 are extracellular; it reads NACNIISRFTRIAGELFG. A helical transmembrane segment spans residues 161-181; the sequence is MLITVLFIQEAVKGLIGEFLV. Residues 182-197 lie on the Cytoplasmic side of the membrane; the sequence is PKSDDPSLEVYQFQWR. The helical transmembrane segment at 198 to 218 threads the bilayer; it reads YTNGLLAVIFSFGLLYTALKS. The Extracellular segment spans residues 219-233; sequence RRARSWKYGFRWMRG. The chain crosses the membrane as a helical span at residues 234 to 254; it reads FIGDYGTLLMLVLWSAFSYTV. Over 255 to 289 the chain is Cytoplasmic; the sequence is PRNLPEGVPRRLELPLPWASESLYHWTVVKDMAKV. A helical transmembrane segment spans residues 290-310; sequence PPLYILAAFIPAIMIAGLYFF. Residues 311-330 are Extracellular-facing; it reads DHCVSAQMAQQKEFNLKNPT. A helical membrane pass occupies residues 331-351; the sequence is AYHYDIFILGIMTLICGLLGL. Over 352–468 the chain is Cytoplasmic; that stretch reads PPSNGVIPQS…EQRVSNLLQS (117 aa). Residues 469-489 form a helical membrane-spanning segment; sequence VLVGLLILAVPVLRMIPTSVL. Residues 490-556 lie on the Extracellular side of the membrane; it reads WGYFTYMAVD…QLLYFLICYG (67 aa). The chain crosses the membrane as a helical span at residues 557-577; sequence VTWIPVGGILFPLPFFILIAL. The Cytoplasmic segment spans residues 578–673; sequence RQYILQRLFD…SQMVKIYNHS (96 aa).

It belongs to the anion exchanger (TC 2.A.31.3) family.

The protein resides in the membrane. In terms of biological role, putative boron transporter. Boron is essential for maintaining the integrity of plants cell walls. This Arabidopsis thaliana (Mouse-ear cress) protein is Probable boron transporter 7 (BOR7).